The sequence spans 460 residues: Argininosuccinate lyase (460 aa).

The protein belongs to the lyase 1 family. Argininosuccinate lyase subfamily.

It is found in the cytoplasm. The enzyme catalyses 2-(N(omega)-L-arginino)succinate = fumarate + L-arginine. It functions in the pathway amino-acid biosynthesis; L-arginine biosynthesis; L-arginine from L-ornithine and carbamoyl phosphate: step 3/3. The protein is Argininosuccinate lyase of Streptococcus mutans serotype c (strain ATCC 700610 / UA159).